Consider the following 83-residue polypeptide: Hainantoxin-III 12 (83 aa).

An N-terminal signal peptide occupies residues 1-21 (MKASMFLALAGLVLLFVVGYA). The propeptide occupies 22–48 (SGSEEKEFPRELLSKIFAVDDFKGEER). Intrachain disulfides connect Cys50-Cys65, Cys57-Cys70, and Cys64-Cys77. Leu81 carries the leucine amide modification.

This sequence belongs to the neurotoxin 10 (Hwtx-1) family. 15 (Hntx-3) subfamily. Monomer. As to expression, expressed by the venom gland.

It localises to the secreted. Selective antagonist of neuronal tetrodotoxin (TTX)-sensitive voltage-gated sodium channels (IC(50)=1270 nM on Nav1.1/SCN1A, 270 nM on Nav1.2/SCN2A, 491 nM on Nav1.3/SCN3A and 232 nM on Nav1.7/SCN9A). This toxin suppress Nav1.7 current amplitude without significantly altering the activation, inactivation, and repriming kinetics. Short extreme depolarizations partially activate the toxin-bound channel, indicating voltage-dependent inhibition of this toxin. This toxin increases the deactivation of the Nav1.7 current after extreme depolarizations. The toxin-Nav1.7 complex is gradually dissociated upon prolonged strong depolarizations in a voltage-dependent manner, and the unbound toxin rebinds to Nav1.7 after a long repolarization. Moreover, analysis of chimeric channels showed that the DIIS3-S4 linker is critical for toxin binding to Nav1.7. These data are consistent with this toxin interacting with Nav1.7 site 4 and trapping the domain II voltage sensor in the closed state. The polypeptide is Hainantoxin-III 12 (Cyriopagopus hainanus (Chinese bird spider)).